An 830-amino-acid polypeptide reads, in one-letter code: Ribosome biogenesis protein ERB1 (830 aa).

A disordered region spans residues 1 to 142 (MAPQPLKVGT…NKDLPVDEKL (142 aa)). 2 stretches are compositionally biased toward acidic residues: residues 35 to 44 (VSEESDEEFG) and 52 to 109 (MSDD…DSDS). Residues 131-142 (EENKDLPVDEKL) are compositionally biased toward basic and acidic residues. WD repeat units follow at residues 481-520 (PGDT…EVWR), 523-563 (LHAG…APHI), 660-698 (KTPG…LIRT), 701-740 (SGVK…KPYK), 744-783 (YHNR…DLMQ), and 799-830 (IDGI…LWCS).

The protein belongs to the WD repeat BOP1/ERB1 family. In terms of assembly, component of the NOP7 complex, composed of ERB1, NOP7 and YTM1. The complex is held together by ERB1, which interacts with NOP7 via its N-terminal domain and with YTM1 via a high-affinity interaction between the seven-bladed beta-propeller domains of the 2 proteins. The NOP7 complex associates with the 66S pre-ribosome.

It localises to the nucleus. The protein resides in the nucleolus. The protein localises to the nucleoplasm. In terms of biological role, component of the NOP7 complex, which is required for maturation of the 25S and 5.8S ribosomal RNAs and formation of the 60S ribosome. The sequence is that of Ribosome biogenesis protein ERB1 from Cryptococcus neoformans var. neoformans serotype D (strain JEC21 / ATCC MYA-565) (Filobasidiella neoformans).